Reading from the N-terminus, the 147-residue chain is Large ribosomal subunit protein bL9 (147 aa).

This sequence belongs to the bacterial ribosomal protein bL9 family.

Binds to the 23S rRNA. The polypeptide is Large ribosomal subunit protein bL9 (Exiguobacterium sp. (strain ATCC BAA-1283 / AT1b)).